The following is a 563-amino-acid chain: Probable trehalase (563 aa).

Residues Arg-154, 161–162 (WD), Asn-198, 207–209 (RSQ), 274–276 (RPE), and Gly-307 contribute to the substrate site. Active-site proton donor/acceptor residues include Asp-309 and Glu-517. Glu-532 serves as a coordination point for substrate.

The protein belongs to the glycosyl hydrolase 37 family.

The enzyme catalyses alpha,alpha-trehalose + H2O = alpha-D-glucose + beta-D-glucose. In terms of biological role, involved in the regulation of trehalose content by hydrolyzing trehalose to glucose. This Oryza sativa subsp. japonica (Rice) protein is Probable trehalase.